The primary structure comprises 513 residues: ATP synthase subunit alpha (513 aa).

169 to 176 contributes to the ATP binding site; it reads GDRQTGKT.

It belongs to the ATPase alpha/beta chains family. In terms of assembly, F-type ATPases have 2 components, CF(1) - the catalytic core - and CF(0) - the membrane proton channel. CF(1) has five subunits: alpha(3), beta(3), gamma(1), delta(1), epsilon(1). CF(0) has three main subunits: a(1), b(2) and c(9-12). The alpha and beta chains form an alternating ring which encloses part of the gamma chain. CF(1) is attached to CF(0) by a central stalk formed by the gamma and epsilon chains, while a peripheral stalk is formed by the delta and b chains.

It is found in the cell inner membrane. It carries out the reaction ATP + H2O + 4 H(+)(in) = ADP + phosphate + 5 H(+)(out). In terms of biological role, produces ATP from ADP in the presence of a proton gradient across the membrane. The alpha chain is a regulatory subunit. The polypeptide is ATP synthase subunit alpha (Thiobacillus denitrificans (strain ATCC 25259 / T1)).